Consider the following 287-residue polypeptide: Undecaprenyl-diphosphatase (287 aa).

Transmembrane regions (helical) follow at residues 6–26, 45–65, 89–109, 111–131, 204–224, 238–258, and 266–286; these read LHLL…FIPV, SGKV…MWIF, NLLL…KSIK, VFYH…IMLW, ATEF…VYDL, AIAV…RAVL, and YRVF…WIYA.

The protein belongs to the UppP family.

It is found in the cell inner membrane. The catalysed reaction is di-trans,octa-cis-undecaprenyl diphosphate + H2O = di-trans,octa-cis-undecaprenyl phosphate + phosphate + H(+). Its function is as follows. Catalyzes the dephosphorylation of undecaprenyl diphosphate (UPP). Confers resistance to bacitracin. The chain is Undecaprenyl-diphosphatase from Bordetella pertussis (strain Tohama I / ATCC BAA-589 / NCTC 13251).